A 335-amino-acid polypeptide reads, in one-letter code: Beta-ketoacyl-[acyl-carrier-protein] synthase III (335 aa).

Catalysis depends on residues C116 and H256. Residues 257–261 are ACP-binding; it reads QANLR. Residue N286 is part of the active site.

The protein belongs to the thiolase-like superfamily. FabH family. In terms of assembly, homodimer.

It localises to the cytoplasm. The catalysed reaction is malonyl-[ACP] + acetyl-CoA + H(+) = 3-oxobutanoyl-[ACP] + CO2 + CoA. It functions in the pathway lipid metabolism; fatty acid biosynthesis. Functionally, catalyzes the condensation reaction of fatty acid synthesis by the addition to an acyl acceptor of two carbons from malonyl-ACP. Catalyzes the first condensation reaction which initiates fatty acid synthesis and may therefore play a role in governing the total rate of fatty acid production. Possesses both acetoacetyl-ACP synthase and acetyl transacylase activities. Its substrate specificity determines the biosynthesis of branched-chain and/or straight-chain of fatty acids. This is Beta-ketoacyl-[acyl-carrier-protein] synthase III from Porphyromonas gingivalis (strain ATCC 33277 / DSM 20709 / CIP 103683 / JCM 12257 / NCTC 11834 / 2561).